The following is a 404-amino-acid chain: Argininosuccinate synthase (404 aa).

Residues 10–18 (AYSGGVDTS) and Ala-38 contribute to the ATP site. Tyr-89 is an L-citrulline binding site. Residue Gly-119 coordinates ATP. Thr-121, Asn-125, and Asp-126 together coordinate L-aspartate. Asn-125 is an L-citrulline binding site. L-citrulline contacts are provided by Arg-129, Ser-177, Ser-186, Glu-262, and Tyr-274.

The protein belongs to the argininosuccinate synthase family. Type 1 subfamily. As to quaternary structure, homotetramer.

The protein localises to the cytoplasm. The enzyme catalyses L-citrulline + L-aspartate + ATP = 2-(N(omega)-L-arginino)succinate + AMP + diphosphate + H(+). It functions in the pathway amino-acid biosynthesis; L-arginine biosynthesis; L-arginine from L-ornithine and carbamoyl phosphate: step 2/3. This chain is Argininosuccinate synthase, found in Prochlorococcus marinus (strain MIT 9301).